Reading from the N-terminus, the 169-residue chain is Small proline-rich protein 3 (169 aa).

The segment covering 1–24 (MSSYQQKQTFTPPPQLQQQQVKQP) has biased composition (low complexity). Positions 1–57 (MSSYQQKQTFTPPPQLQQQQVKQPSQPPPQEIFVPTTKEPCHSKVPQPGNTKIPEPG) are disordered. At serine 2 the chain carries N-acetylserine. Tandem repeats lie at residues 43-50 (SKVPQPGN), 51-58 (TKIPEPGC), 59-66 (TKVPEPGC), 67-74 (TKVPEPGC), 75-82 (TKVPEPGC), 83-90 (TKVPEPGC), 91-98 (TKVPEPGC), 99-106 (TKVPEPGY), 107-114 (TKVPEPGS), 115-122 (IKVPDQGF), 123-130 (IKFPEPGA), 131-138 (IKVPEQGY), 139-146 (TKVPVPGY), and 147-154 (TKLPEPCP). The tract at residues 43-154 (SKVPQPGNTK…GYTKLPEPCP (112 aa)) is 14 X 8 AA approximate tandem repeats. A disordered region spans residues 150–169 (PEPCPSTVTPGPAQQKTKQK). Positions 155 to 169 (STVTPGPAQQKTKQK) are enriched in polar residues.

The protein resides in the cytoplasm. Its function is as follows. Cross-linked envelope protein of keratinocytes. The polypeptide is Small proline-rich protein 3 (SPRR3) (Homo sapiens (Human)).